The chain runs to 248 residues: Probable succinyl-CoA:3-ketoacid coenzyme A transferase subunit A (248 aa).

24–30 contributes to the CoA binding site; the sequence is GGFGLCG.

The protein belongs to the 3-oxoacid CoA-transferase subunit A family. In terms of assembly, heterodimer of a subunit A and a subunit B.

It catalyses the reaction a 3-oxo acid + succinyl-CoA = a 3-oxoacyl-CoA + succinate. The protein is Probable succinyl-CoA:3-ketoacid coenzyme A transferase subunit A (scoA) of Mycobacterium bovis (strain ATCC BAA-935 / AF2122/97).